Consider the following 63-residue polypeptide: Large ribosomal subunit protein bL28A (63 aa).

The protein belongs to the bacterial ribosomal protein bL28 family.

This chain is Large ribosomal subunit protein bL28A, found in Nocardia farcinica (strain IFM 10152).